Here is a 327-residue protein sequence, read N- to C-terminus: Ferrochelatase 2 (327 aa).

Residues His-201 and Glu-282 each coordinate Fe cation.

It belongs to the ferrochelatase family.

The protein resides in the cytoplasm. The catalysed reaction is heme b + 2 H(+) = protoporphyrin IX + Fe(2+). The protein operates within porphyrin-containing compound metabolism; protoheme biosynthesis; protoheme from protoporphyrin-IX: step 1/1. Functionally, catalyzes the ferrous insertion into protoporphyrin IX. The polypeptide is Ferrochelatase 2 (Shewanella oneidensis (strain ATCC 700550 / JCM 31522 / CIP 106686 / LMG 19005 / NCIMB 14063 / MR-1)).